Here is a 151-residue protein sequence, read N- to C-terminus: Probable cGMP 3',5'-cyclic phosphodiesterase subunit delta (151 aa).

This sequence belongs to the PDE6D/unc-119 family. As to quaternary structure, interacts with Pde6.

Its subcellular location is the nucleus. The protein localises to the cytoplasm. The protein is Probable cGMP 3',5'-cyclic phosphodiesterase subunit delta of Drosophila erecta (Fruit fly).